A 659-amino-acid polypeptide reads, in one-letter code: DNA mismatch repair protein MutL (659 aa).

The disordered stretch occupies residues 338–459 (GAPRGASKPG…DTTSERDSLP (122 aa)). Residues 352–362 (SPEHSPTDRDA) show a composition bias toward basic and acidic residues. Residues 374 to 391 (SDGNGQRTAASGATSESP) are compositionally biased toward polar residues.

Belongs to the DNA mismatch repair MutL/HexB family.

In terms of biological role, this protein is involved in the repair of mismatches in DNA. It is required for dam-dependent methyl-directed DNA mismatch repair. May act as a 'molecular matchmaker', a protein that promotes the formation of a stable complex between two or more DNA-binding proteins in an ATP-dependent manner without itself being part of a final effector complex. The polypeptide is DNA mismatch repair protein MutL (Halobacterium salinarum (strain ATCC 29341 / DSM 671 / R1)).